A 217-amino-acid chain; its full sequence is MNLAAIAKNYSMHNGESGTIVPYVPPPYNFASAPTFSQRTSQMESVSLGILNQAMSSTTGASGALKDEKAAFGAMAEALRDPEPIRQIKKQVGIRTLKNLKMELATMRRKKSALKIMIFISGCVTLATSMVGGLSIVDDEILGDYKNNDWLMKTIHGLNLLCTTVLLAAGKISDKIQEEISRTKRDIAKRESYVSAASMSWNGDTEMSLQGIKYGES.

It belongs to the orbivirus NS3 family.

Its function is as follows. May play a role in the release of virions from infected cells. The protein is Non-structural protein NS3 (Segment-10) of Camelus dromedarius (Dromedary).